The primary structure comprises 253 residues: 3-deoxy-manno-octulosonate cytidylyltransferase (253 aa).

This sequence belongs to the KdsB family.

The protein localises to the cytoplasm. It catalyses the reaction 3-deoxy-alpha-D-manno-oct-2-ulosonate + CTP = CMP-3-deoxy-beta-D-manno-octulosonate + diphosphate. The protein operates within nucleotide-sugar biosynthesis; CMP-3-deoxy-D-manno-octulosonate biosynthesis; CMP-3-deoxy-D-manno-octulosonate from 3-deoxy-D-manno-octulosonate and CTP: step 1/1. Its pathway is bacterial outer membrane biogenesis; lipopolysaccharide biosynthesis. In terms of biological role, activates KDO (a required 8-carbon sugar) for incorporation into bacterial lipopolysaccharide in Gram-negative bacteria. The sequence is that of 3-deoxy-manno-octulosonate cytidylyltransferase from Aeromonas hydrophila subsp. hydrophila (strain ATCC 7966 / DSM 30187 / BCRC 13018 / CCUG 14551 / JCM 1027 / KCTC 2358 / NCIMB 9240 / NCTC 8049).